The sequence spans 216 residues: Orotate phosphoribosyltransferase (216 aa).

5-phospho-alpha-D-ribose 1-diphosphate is bound by residues arginine 100, lysine 104, histidine 106, and 126 to 134 (EDLISTGGS). Serine 130 provides a ligand contact to orotate.

Belongs to the purine/pyrimidine phosphoribosyltransferase family. PyrE subfamily. In terms of assembly, homodimer. Interacts with BrxC. Mg(2+) is required as a cofactor.

It carries out the reaction orotidine 5'-phosphate + diphosphate = orotate + 5-phospho-alpha-D-ribose 1-diphosphate. It functions in the pathway pyrimidine metabolism; UMP biosynthesis via de novo pathway; UMP from orotate: step 1/2. Catalyzes the transfer of a ribosyl phosphate group from 5-phosphoribose 1-diphosphate to orotate, leading to the formation of orotidine monophosphate (OMP). The sequence is that of Orotate phosphoribosyltransferase from Bacillus subtilis (strain 168).